We begin with the raw amino-acid sequence, 377 residues long: dTDP-fucopyranose mutase (377 aa).

Residues Ser12, 31–32 (DD), Asn39, 58–59 (HI), Arg348, and 355–360 (LDMDVC) each bind FAD.

Belongs to the UDP-galactopyranose/dTDP-fucopyranose mutase family. It depends on FAD as a cofactor.

The catalysed reaction is dTDP-alpha-D-fucose = dTDP-alpha-D-fucofuranose. It participates in bacterial outer membrane biogenesis; LPS O-antigen biosynthesis. Its activity is regulated as follows. Inhibited by Cu(2+), while other divalent cations such as Ca(2+), Co(2+), Fe(2+) and Mg(2+) have no obvious effects on enzyme activity. Catalyzes the conversion of dTDP-alpha-D-fucopyranose to dTDP-alpha-D-fucofuranose. This is a step in the biosynthesis of D-fucofuranose, a component of E.coli O52 O antigen. This is dTDP-fucopyranose mutase (fcf2) from Escherichia coli.